Reading from the N-terminus, the 359-residue chain is 3-dehydroquinate synthase (359 aa).

NAD(+) is bound by residues aspartate 71–lysine 76, glycine 105–aspartate 109, threonine 129–threonine 130, lysine 142, lysine 151, and cysteine 169–threonine 172. Zn(2+)-binding residues include glutamate 184, histidine 247, and histidine 264.

The protein belongs to the sugar phosphate cyclases superfamily. Dehydroquinate synthase family. Co(2+) is required as a cofactor. Zn(2+) serves as cofactor. The cofactor is NAD(+).

It is found in the cytoplasm. The catalysed reaction is 7-phospho-2-dehydro-3-deoxy-D-arabino-heptonate = 3-dehydroquinate + phosphate. It participates in metabolic intermediate biosynthesis; chorismate biosynthesis; chorismate from D-erythrose 4-phosphate and phosphoenolpyruvate: step 2/7. Its function is as follows. Catalyzes the conversion of 3-deoxy-D-arabino-heptulosonate 7-phosphate (DAHP) to dehydroquinate (DHQ). The polypeptide is 3-dehydroquinate synthase (Shewanella sp. (strain W3-18-1)).